Reading from the N-terminus, the 297-residue chain is uncharacterized protein (297 aa).

The 60-residue stretch at 1–60 folds into the HTH lysR-type domain; sequence MNIELRHLRYFVAVAEELHFGRAAARLNISQPPLSQQIQALEQQIGARLLARTNRSVLLT. Residues 20 to 40 constitute a DNA-binding region (H-T-H motif); the sequence is FGRAAARLNISQPPLSQQIQA.

Belongs to the LysR transcriptional regulatory family.

This is an uncharacterized protein from Escherichia coli (strain K12).